Here is a 380-residue protein sequence, read N- to C-terminus: cAMP-dependent protein kinase type I-alpha regulatory subunit (380 aa).

At Met1 the chain carries N-acetylmethionine. Ala2 bears the N-acetylalanine; in cAMP-dependent protein kinase type I-alpha regulatory subunit, N-terminally processed mark. The interval 2–135 is dimerization and phosphorylation; it reads ASGTTASEEE…ALAKAIEKNV (134 aa). A phosphoserine mark is found at Ser3, Ser76, and Ser82. The tract at residues 64-96 is disordered; sequence IQNLQKAGSRADSREDEISPPPPNPVVKGRRRR. Positions 95-99 match the Pseudophosphorylation motif motif; the sequence is RRGAI. Ser100 bears the Phosphoserine mark. Residues 136 to 253, Glu201, Arg210, 254 to 380, Glu325, and Arg334 contribute to the 3',5'-cyclic AMP site; these read LFSH…SKVS and ILES…SLSV. Ser257 carries the post-translational modification Phosphoserine.

This sequence belongs to the cAMP-dependent kinase regulatory chain family. The inactive holoenzyme is composed of two regulatory chains and two catalytic chains. Activation by cAMP releases the two active catalytic monomers and the regulatory dimer. Interacts with PRKACA and PRKACB. PRKAR1A also interacts with RFC2; the complex may be involved in cell survival. Interacts with AKAP4. Interacts with RARA; the interaction occurs in the presence of cAMP or FSH and regulates RARA transcriptional activity. Interacts with the phosphorylated form of PJA2. Interacts with CBFA2T3. Interacts with PRKX; regulates this cAMP-dependent protein kinase. Interacts with smAKAP; this interaction may target PRKAR1A to the plasma membrane. Interacts with AICDA. The pseudophosphorylation site binds to the substrate-binding region of the catalytic chain, resulting in the inhibition of its activity. The physiological significance of the in vitro phosphorylation of a proximal serine is unclear. As to expression, four types of regulatory chains are found: I-alpha, I-beta, II-alpha, and II-beta. Their expression varies among tissues and is in some cases constitutive and in others inducible.

The protein resides in the cell membrane. Its function is as follows. Regulatory subunit of the cAMP-dependent protein kinases involved in cAMP signaling in cells. The chain is cAMP-dependent protein kinase type I-alpha regulatory subunit (PRKAR1A) from Bos taurus (Bovine).